The chain runs to 1058 residues: Carbamoyl phosphate synthase large chain (1058 aa).

The carboxyphosphate synthetic domain stretch occupies residues 1 to 401; it reads MPKRTDIQKI…SLLKACRSLE (401 aa). Residues arginine 129, arginine 169, glycine 175, glycine 176, arginine 208, isoleucine 210, glutamate 215, glycine 241, isoleucine 242, histidine 243, glutamine 284, and glutamate 298 each contribute to the ATP site. Positions 133–327 constitute an ATP-grasp 1 domain; it reads KQLMEELEQP…IAKLAAKIAV (195 aa). Mg(2+)-binding residues include glutamine 284, glutamate 298, and asparagine 300. Mn(2+)-binding residues include glutamine 284, glutamate 298, and asparagine 300. The tract at residues 402 to 546 is oligomerization domain; the sequence is IGVHHNEIPE…YSTYGWENES (145 aa). Positions 547 to 929 are carbamoyl phosphate synthetic domain; it reads IRSDKESVLV…ALYKAFEASY (383 aa). The 191-residue stretch at 671 to 861 folds into the ATP-grasp 2 domain; that stretch reads EQALKELDIP…MAQVATKLIL (191 aa). Arginine 707, serine 746, isoleucine 748, glutamate 752, glycine 777, valine 778, histidine 779, serine 780, glutamine 820, and glutamate 832 together coordinate ATP. Mg(2+)-binding residues include glutamine 820, glutamate 832, and asparagine 834. Mn(2+) is bound by residues glutamine 820, glutamate 832, and asparagine 834. One can recognise an MGS-like domain in the interval 930 to 1058; it reads LHLPTFGNVV…ESRSFVTEAI (129 aa). The tract at residues 930–1058 is allosteric domain; the sequence is LHLPTFGNVV…ESRSFVTEAI (129 aa).

It belongs to the CarB family. Composed of two chains; the small (or glutamine) chain promotes the hydrolysis of glutamine to ammonia, which is used by the large (or ammonia) chain to synthesize carbamoyl phosphate. Tetramer of heterodimers (alpha,beta)4. Mg(2+) serves as cofactor. It depends on Mn(2+) as a cofactor.

The catalysed reaction is hydrogencarbonate + L-glutamine + 2 ATP + H2O = carbamoyl phosphate + L-glutamate + 2 ADP + phosphate + 2 H(+). It catalyses the reaction hydrogencarbonate + NH4(+) + 2 ATP = carbamoyl phosphate + 2 ADP + phosphate + 2 H(+). It participates in amino-acid biosynthesis; L-arginine biosynthesis; carbamoyl phosphate from bicarbonate: step 1/1. The protein operates within pyrimidine metabolism; UMP biosynthesis via de novo pathway; (S)-dihydroorotate from bicarbonate: step 1/3. Functionally, large subunit of the glutamine-dependent carbamoyl phosphate synthetase (CPSase). CPSase catalyzes the formation of carbamoyl phosphate from the ammonia moiety of glutamine, carbonate, and phosphate donated by ATP, constituting the first step of 2 biosynthetic pathways, one leading to arginine and/or urea and the other to pyrimidine nucleotides. The large subunit (synthetase) binds the substrates ammonia (free or transferred from glutamine from the small subunit), hydrogencarbonate and ATP and carries out an ATP-coupled ligase reaction, activating hydrogencarbonate by forming carboxy phosphate which reacts with ammonia to form carbamoyl phosphate. In Streptococcus pneumoniae (strain ATCC BAA-255 / R6), this protein is Carbamoyl phosphate synthase large chain.